Reading from the N-terminus, the 287-residue chain is MTDSTLHLLKAFFLGIVEGLTEFIPVSSTGHLIVIGDWINFASSSGKVFEVVIQFGSILAVMWIFRARLWQLIRGTLTGVRQEVNFTRNLLLAFLPAAVIGAIFIKSIKQVFYHPGVVAVTLVVGGFIMLWVERRAPHTPGDAPGAADDTASDERATAHTLEQISAKQALGVGVAQCVAMIPGVSRSGATIIGGMIAGIQRKTATEFSFFLAMPTMLGAAVYDLYRNIGLLSQHDMSAIAVGFVAAFLSALVVVRAVLRFVANHTYRVFAWYRIALGLVVAAWIYAK.

7 helical membrane-spanning segments follow: residues 6 to 26, 45 to 65, 89 to 109, 111 to 131, 204 to 224, 238 to 258, and 266 to 286; these read LHLL…FIPV, SGKV…MWIF, NLLL…KSIK, VFYH…IMLW, ATEF…VYDL, AIAV…RAVL, and YRVF…WIYA.

The protein belongs to the UppP family.

The protein localises to the cell inner membrane. It catalyses the reaction di-trans,octa-cis-undecaprenyl diphosphate + H2O = di-trans,octa-cis-undecaprenyl phosphate + phosphate + H(+). In terms of biological role, catalyzes the dephosphorylation of undecaprenyl diphosphate (UPP). Confers resistance to bacitracin. The chain is Undecaprenyl-diphosphatase from Bordetella bronchiseptica (strain ATCC BAA-588 / NCTC 13252 / RB50) (Alcaligenes bronchisepticus).